The following is a 228-amino-acid chain: Triosephosphate isomerase (228 aa).

Residue 12 to 14 (NFK) coordinates substrate. The active-site Electrophile is His-96. Glu-144 (proton acceptor) is an active-site residue. Substrate is bound by residues Ile-149, Gly-184, and 205 to 206 (AS).

The protein belongs to the triosephosphate isomerase family. Homotetramer; dimer of dimers.

It is found in the cytoplasm. The catalysed reaction is D-glyceraldehyde 3-phosphate = dihydroxyacetone phosphate. It participates in carbohydrate biosynthesis; gluconeogenesis. The protein operates within carbohydrate degradation; glycolysis; D-glyceraldehyde 3-phosphate from glycerone phosphate: step 1/1. Its function is as follows. Involved in the gluconeogenesis. Catalyzes stereospecifically the conversion of dihydroxyacetone phosphate (DHAP) to D-glyceraldehyde-3-phosphate (G3P). The sequence is that of Triosephosphate isomerase from Pyrococcus furiosus (strain ATCC 43587 / DSM 3638 / JCM 8422 / Vc1).